The primary structure comprises 181 residues: Adenylate kinase (181 aa).

10 to 15 is an ATP binding site; it reads GAGKGT. The tract at residues 30-59 is NMP; sequence STGDLFRSNISEGTELGLQAKQYLDAGDLV. AMP is bound by residues threonine 31, arginine 36, 57–59, 85–88, and glutamine 92; these read DLV and GFPR. The segment at 126–132 is LID; that stretch reads GRGRADD. Arginine 127 serves as a coordination point for ATP. AMP-binding residues include arginine 129 and arginine 140. Glycine 166 serves as a coordination point for ATP.

The protein belongs to the adenylate kinase family. Monomer.

It is found in the cytoplasm. The catalysed reaction is AMP + ATP = 2 ADP. It participates in purine metabolism; AMP biosynthesis via salvage pathway; AMP from ADP: step 1/1. Catalyzes the reversible transfer of the terminal phosphate group between ATP and AMP. Plays an important role in cellular energy homeostasis and in adenine nucleotide metabolism. The polypeptide is Adenylate kinase (Mycobacteroides abscessus (strain ATCC 19977 / DSM 44196 / CCUG 20993 / CIP 104536 / JCM 13569 / NCTC 13031 / TMC 1543 / L948) (Mycobacterium abscessus)).